Reading from the N-terminus, the 149-residue chain is Calmodulin (149 aa).

At Ala2 the chain carries N-acetylalanine. 4 EF-hand domains span residues 8 to 43 (EQIA…LGQN), 44 to 79 (PTEA…KMKD), 81 to 116 (DSEE…LGEK), and 117 to 149 (LSED…MMSK). Ca(2+)-binding residues include Asp21, Asp23, Asp25, Thr27, Glu32, Asp57, Asp59, Asn61, Thr63, Glu68, Asp94, Asp96, Asn98, Tyr100, Glu105, Asp130, Asp132, Asp134, Gln136, and Glu141.

The protein belongs to the calmodulin family.

Calmodulin mediates the control of a large number of enzymes, ion channels and other proteins by Ca(2+). Among the enzymes to be stimulated by the calmodulin-Ca(2+) complex are a number of protein kinases and phosphatases. The chain is Calmodulin (CMD1) from Blastocladiella emersonii (Aquatic fungus).